A 188-amino-acid chain; its full sequence is Capsid protein (188 aa).

The span at 150–181 (RRRGGARASRSPRRRTPSPRRRRSQSPRRRRS) shows a compositional bias: basic residues. Residues 150 to 188 (RRRGGARASRSPRRRTPSPRRRRSQSPRRRRSQSPSANC) form a disordered region. Residues Ser-160, Ser-167, and Ser-175 each carry the phosphoserine; by host modification. The stretch at 160–166 (SPRRRTP) is one 1; half-length repeat. The 3 X 8 AA repeats of S-P-R-R-R-[PR]-S-Q stretch occupies residues 160-182 (SPRRRTPSPRRRRSQSPRRRRSQ). The short motif at 163–180 (RRTPSPRRRRSQSPRRRR) is the Bipartite nuclear localization signal element. 2 repeat units span residues 167–174 (SPRRRRSQ) and 175–182 (SPRRRRSQ). The segment at 182-188 (QSPSANC) is RNA binding.

It belongs to the orthohepadnavirus core antigen family. Homodimerizes, then multimerizes. Interacts with cytosol exposed regions of viral L glycoprotein present in the reticulum-to-Golgi compartment. Interacts with human FLNB. Phosphorylated form interacts with host importin alpha; this interaction depends on the exposure of the NLS, which itself depends upon genome maturation and/or phosphorylation of the capsid protein. Interacts with host NUP153. In terms of processing, phosphorylated by host SRPK1, SRPK2, and maybe protein kinase C or GAPDH. Phosphorylation is critical for pregenomic RNA packaging. Protein kinase C phosphorylation is stimulated by HBx protein and may play a role in transport of the viral genome to the nucleus at the late step during the viral replication cycle.

The protein resides in the virion. The protein localises to the host cytoplasm. Functionally, self assembles to form an icosahedral capsid. Most capsids appear to be large particles with an icosahedral symmetry of T=4 and consist of 240 copies of capsid protein, though a fraction forms smaller T=3 particles consisting of 180 capsid proteins. Entering capsids are transported along microtubules to the nucleus. Phosphorylation of the capsid is thought to induce exposure of nuclear localization signal in the C-terminal portion of the capsid protein that allows binding to the nuclear pore complex via the importin (karyopherin-) alpha and beta. Capsids are imported in intact form through the nuclear pore into the nuclear basket, where it probably binds NUP153. Only capsids that contain the mature viral genome can release the viral DNA and capsid protein into the nucleoplasm. Immature capsids get stuck in the basket. Capsids encapsulate the pre-genomic RNA and the P protein. Pre-genomic RNA is reverse-transcribed into DNA while the capsid is still in the cytoplasm. The capsid can then either be directed to the nucleus, providing more genomes for transcription, or bud through the endoplasmic reticulum to provide new virions. This Marmota monax (Woodchuck) protein is Capsid protein.